Reading from the N-terminus, the 141-residue chain is Auxin-responsive protein SAUR62 (141 aa).

This sequence belongs to the ARG7 family. Expressed in stamen filaments and petals.

It is found in the cell membrane. Functionally, may promote auxin-stimulated organ elongation, such as hypocotyls, stamen filaments and petals. This is Auxin-responsive protein SAUR62 from Arabidopsis thaliana (Mouse-ear cress).